The chain runs to 145 residues: Cystatin-like 1 (145 aa).

The first 19 residues, 1-19 (MGIGCWRNPLLLLIALVLS), serve as a signal peptide directing secretion. Residues 37–115 (SKKNMNSTLN…KKLRKSLICE (79 aa)) form the Cystatin domain. Residue Asn-42 is glycosylated (N-linked (GlcNAc...) asparagine). 2 cysteine pairs are disulfide-bonded: Cys-91-Cys-101 and Cys-114-Cys-134.

It belongs to the cystatin family.

It is found in the secreted. In Homo sapiens (Human), this protein is Cystatin-like 1 (CSTL1).